Here is a 382-residue protein sequence, read N- to C-terminus: MNDRGELFKPIKVGNMLLQHRIVHAPMTRLRATDYGKITGLMVEYYSQRSMIPGTLLIADATFVGEKSGGFPNNPRCFTKEQAESWIPLVEAVHKNKSFLFIQFWPLPGDLKDEYRNDLEKMQKITYSDCPQDPGGLPAGIHSFDAVQGVEVYKKKYMSKRDIQEHIQDFVNAADLAVNIAKADGVEIHQVNGFLLDRFVLGGFGDQCDPEYRGSIENRCRFPLEVLEAVTRKIGQERVGYRISPFSGWMQKIDFMEVNIYLMSEIAKRFPKLAYIHAIEPRKYWSGHKLVSSEQNTSFLQKYWKGPFITAGGYDPETAVQAANERGVLVAFGRNFIANPDLVFRIKHHIPLNKWDRSSFYLPKTEKGYTDYPFSKEFLQSK.

2 residues coordinate FMN: T28 and H189. Residues H189 and N192 each coordinate substrate. 2 residues coordinate FMN: R242 and R334. Y361 is a binding site for substrate.

The protein belongs to the NADH:flavin oxidoreductase/NADH oxidase family. In terms of assembly, homodimer or heterodimer. The cofactor is FMN.

It catalyses the reaction A + NADPH + H(+) = AH2 + NADP(+). This Schizosaccharomyces pombe (strain 972 / ATCC 24843) (Fission yeast) protein is Putative NADPH dehydrogenase C5H10.04.